The chain runs to 159 residues: Olfactory receptor-like protein COR8 (159 aa).

The Cytoplasmic segment spans residues 1-16; it reads VAICNPLLYTISMPKS. Residues 17-41 form a helical membrane-spanning segment; the sequence is LCMKLVAGSYLGGVLNSLTQTCCLL. Topologically, residues 42-82 are extracellular; that stretch reads PLPFCGPNVINHYFCDTNPLLKLTCSDGRLNELLLVTFNGT. An N-linked (GlcNAc...) asparagine glycan is attached at Asn80. The helical transmembrane segment at 83–103 threads the bilayer; it reads ISMTVLLIIVISYVYILVSIL. Over 104–116 the chain is Cytoplasmic; sequence SIRSARGRHKAFS. A helical transmembrane segment spans residues 117–137; it reads TCASHLLTVTLFYVPAGLSHM. The Extracellular segment spans residues 138–148; sequence QPGSKYSLDME. Residues 149 to 159 traverse the membrane as a helical segment; that stretch reads KVTAVFYTLLV.

This sequence belongs to the G-protein coupled receptor 1 family.

The protein resides in the cell membrane. Its function is as follows. Odorant receptor. This Gallus gallus (Chicken) protein is Olfactory receptor-like protein COR8 (COR8).